Consider the following 338-residue polypeptide: RNA 3'-terminal phosphate cyclase (338 aa).

Residues Q103 and 283-287 each bind ATP; that span reads YLADQ. H308 serves as the catalytic Tele-AMP-histidine intermediate.

Belongs to the RNA 3'-terminal cyclase family. Type 1 subfamily.

The protein resides in the cytoplasm. The catalysed reaction is a 3'-end 3'-phospho-ribonucleotide-RNA + ATP = a 3'-end 2',3'-cyclophospho-ribonucleotide-RNA + AMP + diphosphate. Catalyzes the conversion of 3'-phosphate to a 2',3'-cyclic phosphodiester at the end of RNA. The mechanism of action of the enzyme occurs in 3 steps: (A) adenylation of the enzyme by ATP; (B) transfer of adenylate to an RNA-N3'P to produce RNA-N3'PP5'A; (C) and attack of the adjacent 2'-hydroxyl on the 3'-phosphorus in the diester linkage to produce the cyclic end product. The biological role of this enzyme is unknown but it is likely to function in some aspects of cellular RNA processing. The protein is RNA 3'-terminal phosphate cyclase of Escherichia coli O8 (strain IAI1).